The primary structure comprises 383 residues: Serine protease 23 (383 aa).

Residues 1 to 23 (MAGIPGLLILLLVLLCVFMQVSP) form the signal peptide. N93 carries N-linked (GlcNAc...) asparagine glycosylation. A disulfide bridge connects residues C160 and C176. H175 functions as the Charge relay system in the catalytic mechanism. N207 carries N-linked (GlcNAc...) asparagine glycosylation. Catalysis depends on charge relay system residues D240 and S316.

This sequence belongs to the peptidase S1 family.

The protein localises to the secreted. This is Serine protease 23 (Prss23) from Rattus norvegicus (Rat).